Consider the following 78-residue polypeptide: Metallothionein-like protein type 2 (78 aa).

It belongs to the metallothionein superfamily. Type 15 family.

Functionally, metallothioneins have a high content of cysteine residues that bind various heavy metals. The chain is Metallothionein-like protein type 2 from Musa acuminata (Banana).